Here is a 512-residue protein sequence, read N- to C-terminus: Probable pectinesterase/pectinesterase inhibitor 54 (512 aa).

Residues 1 to 24 (MGVIDMVLFWVLLVNALLIVDASS) form the signal peptide. The pectinesterase inhibitor 54 stretch occupies residues 29 to 193 (FAYQNEMQRH…SRLVSNSLTL (165 aa)). Asn71 and Asn131 each carry an N-linked (GlcNAc...) asparagine glycan. A pectinesterase 54 region spans residues 229–496 (HVVVAKDGSG…FSVVKRRNGE (268 aa)). Position 302 (Gln302) interacts with substrate. The active-site Proton donor; for pectinesterase activity is the Asp325. The cysteines at positions 339 and 359 are disulfide-linked. Asp346 serves as the catalytic Nucleophile; for pectinesterase activity. Residues Arg415 and Trp417 each contribute to the substrate site.

It in the N-terminal section; belongs to the PMEI family. The protein in the C-terminal section; belongs to the pectinesterase family. As to expression, expressed in siliques.

The protein localises to the secreted. It is found in the cell wall. It catalyses the reaction [(1-&gt;4)-alpha-D-galacturonosyl methyl ester](n) + n H2O = [(1-&gt;4)-alpha-D-galacturonosyl](n) + n methanol + n H(+). It functions in the pathway glycan metabolism; pectin degradation; 2-dehydro-3-deoxy-D-gluconate from pectin: step 1/5. In terms of biological role, acts in the modification of cell walls via demethylesterification of cell wall pectin. In Arabidopsis thaliana (Mouse-ear cress), this protein is Probable pectinesterase/pectinesterase inhibitor 54 (PME54).